The chain runs to 459 residues: LAS seventeen-binding protein 3 (459 aa).

The segment at 219 to 403 (RPSNGGRGSF…APTSPSTSSP (185 aa)) is disordered. S227 is subject to Phosphoserine. Over residues 229-242 (DDDEDDYYDDDDYY) the composition is skewed to acidic residues. The span at 243–262 (NDIPSSFSSTDASSTRPNTR) shows a compositional bias: low complexity. Residues 289-300 (YSRNSRLAPTNS) show a composition bias toward polar residues. The residue at position 298 (T298) is a Phosphothreonine. A phosphoserine mark is found at S300 and S303. Residues 340-350 (DEYDDYDDDYE) are compositionally biased toward acidic residues. Positions 351-371 (SGYRRGNGRDRTKDREVDDLS) are enriched in basic and acidic residues. The segment covering 372–391 (NRFSKSRISSASTPQTSQGR) has biased composition (polar residues). T393 carries the post-translational modification Phosphothreonine. Residues 393–403 (TAPTSPSTSSP) show a composition bias toward low complexity. Phosphoserine occurs at positions 397, 402, and 416. The SH3 domain maps to 400-459 (TSSPKAVALYSFAGEESGDLPFRKGDVITILKKSDSQNDWWTGRVNGREGIFPANYVELV).

The protein belongs to the SH3YL1 family. Interacts with LAS17. In terms of processing, phosphorylation of Ser-397 is induced 2-fold in response to mating pheromone.

Its subcellular location is the cytoplasm. This is LAS seventeen-binding protein 3 (LSB3) from Saccharomyces cerevisiae (strain YJM789) (Baker's yeast).